The following is a 705-amino-acid chain: Elongation factor G (705 aa).

Residues 8 to 290 enclose the tr-type G domain; it reads EKYRNIGICA…GVVEYLPAPN (283 aa). Residues 17–24, 88–92, and 142–145 each bind GTP; these read AHVDAGKT, DTPGH, and NKMD.

The protein belongs to the TRAFAC class translation factor GTPase superfamily. Classic translation factor GTPase family. EF-G/EF-2 subfamily.

It localises to the cytoplasm. Catalyzes the GTP-dependent ribosomal translocation step during translation elongation. During this step, the ribosome changes from the pre-translocational (PRE) to the post-translocational (POST) state as the newly formed A-site-bound peptidyl-tRNA and P-site-bound deacylated tRNA move to the P and E sites, respectively. Catalyzes the coordinated movement of the two tRNA molecules, the mRNA and conformational changes in the ribosome. The chain is Elongation factor G from Francisella philomiragia subsp. philomiragia (strain ATCC 25017 / CCUG 19701 / FSC 153 / O#319-036).